The following is a 304-amino-acid chain: Aspartate carbamoyltransferase catalytic subunit (304 aa).

Carbamoyl phosphate contacts are provided by Arg-49 and Thr-50. Residue Lys-77 coordinates L-aspartate. Carbamoyl phosphate-binding residues include Arg-99, His-127, and Gln-130. L-aspartate is bound by residues Arg-160 and Arg-211. Carbamoyl phosphate is bound by residues Ala-252 and Pro-253.

It belongs to the aspartate/ornithine carbamoyltransferase superfamily. ATCase family. As to quaternary structure, heterododecamer (2C3:3R2) of six catalytic PyrB chains organized as two trimers (C3), and six regulatory PyrI chains organized as three dimers (R2).

It carries out the reaction carbamoyl phosphate + L-aspartate = N-carbamoyl-L-aspartate + phosphate + H(+). The protein operates within pyrimidine metabolism; UMP biosynthesis via de novo pathway; (S)-dihydroorotate from bicarbonate: step 2/3. Functionally, catalyzes the condensation of carbamoyl phosphate and aspartate to form carbamoyl aspartate and inorganic phosphate, the committed step in the de novo pyrimidine nucleotide biosynthesis pathway. The protein is Aspartate carbamoyltransferase catalytic subunit of Bacillus mycoides (strain KBAB4) (Bacillus weihenstephanensis).